Consider the following 329-residue polypeptide: Sulfate/thiosulfate import ATP-binding protein CysA (329 aa).

The ABC transporter domain maps to 3 to 237 (IEVRNVSKRF…PANDFVYHFL (235 aa)). 35–42 (GPSGCGKT) provides a ligand contact to ATP.

The protein belongs to the ABC transporter superfamily. Sulfate/tungstate importer (TC 3.A.1.6) family. As to quaternary structure, the complex is composed of two ATP-binding proteins (CysA), two transmembrane proteins (CysT and CysW) and a solute-binding protein (CysP).

It localises to the cell inner membrane. The enzyme catalyses sulfate(out) + ATP + H2O = sulfate(in) + ADP + phosphate + H(+). It carries out the reaction thiosulfate(out) + ATP + H2O = thiosulfate(in) + ADP + phosphate + H(+). Part of the ABC transporter complex CysAWTP involved in sulfate/thiosulfate import. Responsible for energy coupling to the transport system. This Pseudomonas putida (strain ATCC 47054 / DSM 6125 / CFBP 8728 / NCIMB 11950 / KT2440) protein is Sulfate/thiosulfate import ATP-binding protein CysA.